A 502-amino-acid chain; its full sequence is Maturase K (502 aa).

This sequence belongs to the intron maturase 2 family. MatK subfamily.

The protein resides in the plastid. Its subcellular location is the chloroplast. In terms of biological role, usually encoded in the trnK tRNA gene intron. Probably assists in splicing its own and other chloroplast group II introns. This is Maturase K from Sisymbrium irio (London rocket).